Reading from the N-terminus, the 396-residue chain is S-adenosylmethionine synthase (396 aa).

Position 16 (H16) interacts with ATP. D18 contributes to the Mg(2+) binding site. Residue E44 coordinates K(+). The L-methionine site is built by E57 and Q100. The flexible loop stretch occupies residues 100 to 110 (QSVDINQGVDR). Residues 165–167 (DAK), 231–232 (KF), D240, 246–247 (RK), A263, and K267 each bind ATP. D240 is a binding site for L-methionine. An L-methionine-binding site is contributed by K271.

Belongs to the AdoMet synthase family. Homotetramer; dimer of dimers. It depends on Mg(2+) as a cofactor. Requires K(+) as cofactor.

The protein resides in the cytoplasm. The catalysed reaction is L-methionine + ATP + H2O = S-adenosyl-L-methionine + phosphate + diphosphate. It functions in the pathway amino-acid biosynthesis; S-adenosyl-L-methionine biosynthesis; S-adenosyl-L-methionine from L-methionine: step 1/1. Its function is as follows. Catalyzes the formation of S-adenosylmethionine (AdoMet) from methionine and ATP. The overall synthetic reaction is composed of two sequential steps, AdoMet formation and the subsequent tripolyphosphate hydrolysis which occurs prior to release of AdoMet from the enzyme. The protein is S-adenosylmethionine synthase of Azotobacter vinelandii (strain DJ / ATCC BAA-1303).